The primary structure comprises 1075 residues: Disheveled-associated activator of morphogenesis 2 (1075 aa).

The GBD/FH3 domain maps to 40–416; it reads VPIPPTEELN…QIVLQDERGD (377 aa). Residues 437–517 are a coiled coil; that stretch reads NENEVKQWRD…VAQLNEYSQG (81 aa). Disordered regions lie at residues 517–611, 1006–1025, and 1048–1075; these read GGSI…IPQP, KEQREKERRQKKAKAGSISE, and SKLKRNRKRSGNQGLETSRERVVTKLNY. Over residues 523-532 the composition is skewed to pro residues; sequence PAPPPPPPGG. The segment covering 533-544 has biased composition (low complexity); the sequence is PLALSSALSSAL. Positions 550 to 581 are enriched in pro residues; sequence PPLPPPLPFSSCPPPPAPPPPPGGPPPPPGAP. The FH2 domain occupies 605 to 1075; sequence KKSIPQPSHP…RERVVTKLNY (471 aa). The region spanning 1025–1075 is the DAD domain; that stretch reads EETGEFDDLVSALRSGEVFDKDLSKLKRNRKRSGNQGLETSRERVVTKLNY. Residues 1064 to 1075 are compositionally biased toward basic and acidic residues; that stretch reads TSRERVVTKLNY.

This sequence belongs to the formin homology family. As to expression, expressed in progenitor populations of the embryonic spinal cord (at protein level).

Functionally, key regulator of the Wnt signaling pathway, which is required for various processes during development, such as dorsal patterning, determination of left/right symmetry or myelination in the central nervous system. Acts downstream of Wnt ligands and upstream of beta-catenin (CTNNB1). Required for canonical Wnt signaling pathway during patterning in the dorsal spinal cord by promoting the aggregation of Disheveled (Dvl) complexes, thereby clustering and formation of Wnt receptor signalosomes and potentiating Wnt activity. During dorsal patterning of the spinal cord, inhibits oligodendrocytes differentiation via interaction with PIP5K1A. Also regulates non-canonical Wnt signaling pathway. Acts downstream of PITX2 in the developing gut and is required for left/right asymmetry within dorsal mesentery: affects mesenchymal condensation by lengthening cadherin-based junctions through WNT5A and non-canonical Wnt signaling, inducing polarized condensation in the left dorsal mesentery necessary to initiate gut rotation. Together with DAAM1, required for myocardial maturation and sarcomere assembly. This chain is Disheveled-associated activator of morphogenesis 2, found in Gallus gallus (Chicken).